The sequence spans 241 residues: Geranylgeranylglyceryl phosphate synthase (241 aa).

Mg(2+) contacts are provided by Asp-26 and Ser-52. Sn-glycerol 1-phosphate contacts are provided by residues 172-178 (YFEAGSG), 204-205 (GG), and 226-227 (GT).

It belongs to the GGGP/HepGP synthase family. Group II subfamily. Mg(2+) is required as a cofactor.

The protein localises to the cytoplasm. It catalyses the reaction sn-glycerol 1-phosphate + (2E,6E,10E)-geranylgeranyl diphosphate = sn-3-O-(geranylgeranyl)glycerol 1-phosphate + diphosphate. It functions in the pathway membrane lipid metabolism; glycerophospholipid metabolism. In terms of biological role, prenyltransferase that catalyzes the transfer of the geranylgeranyl moiety of geranylgeranyl diphosphate (GGPP) to the C3 hydroxyl of sn-glycerol-1-phosphate (G1P). This reaction is the first ether-bond-formation step in the biosynthesis of archaeal membrane lipids. In Hyperthermus butylicus (strain DSM 5456 / JCM 9403 / PLM1-5), this protein is Geranylgeranylglyceryl phosphate synthase.